The chain runs to 236 residues: Uridylate kinase (236 aa).

10 to 13 (KLSG) serves as a coordination point for ATP. Gly52 contributes to the UMP binding site. The ATP site is built by Gly53 and Arg57. UMP contacts are provided by residues Asp72 and 133 to 140 (TGNPFFTT). Positions 160, 166, and 169 each coordinate ATP.

Belongs to the UMP kinase family. In terms of assembly, homohexamer.

It is found in the cytoplasm. The catalysed reaction is UMP + ATP = UDP + ADP. Its pathway is pyrimidine metabolism; CTP biosynthesis via de novo pathway; UDP from UMP (UMPK route): step 1/1. Inhibited by UTP. Its function is as follows. Catalyzes the reversible phosphorylation of UMP to UDP. The sequence is that of Uridylate kinase from Cupriavidus pinatubonensis (strain JMP 134 / LMG 1197) (Cupriavidus necator (strain JMP 134)).